A 61-amino-acid chain; its full sequence is Disintegrin rubistatin (61 aa).

The Disintegrin domain maps to Asn-1–Gly-61. Intrachain disulfides connect Cys-3-Cys-26, Cys-17-Cys-23, Cys-22-Cys-47, and Cys-35-Cys-54. The Cell attachment site; atypical (MVD) motif lies at Met-39–Asp-41.

This sequence belongs to the venom metalloproteinase (M12B) family. P-II subfamily. P-IIa sub-subfamily. Monomer. Expressed by the venom gland.

The protein resides in the secreted. Recombinant disintegrin rubistatin inhibits ADP-induced platelet aggregation. In addition, it strongly induces apoptosis, and inhibits cell migration and proliferation of the human cancer cell line SK-Mel-28. In Crotalus ruber ruber (Red diamond rattlesnake), this protein is Disintegrin rubistatin.